Consider the following 270-residue polypeptide: Phosphatidylglycerol--prolipoprotein diacylglyceryl transferase (270 aa).

7 consecutive transmembrane segments (helical) span residues 14–34, 60–80, 103–123, 133–153, 181–201, 209–229, and 235–255; these read VAFT…ILAL, YFFW…IAIY, FVGI…LATI, LWQL…FGRI, PSQL…LFFY, GELI…CEFF, and GIGF…LMFF. Position 152 (arginine 152) interacts with a 1,2-diacyl-sn-glycero-3-phospho-(1'-sn-glycerol).

The protein belongs to the Lgt family.

The protein localises to the cell inner membrane. The catalysed reaction is L-cysteinyl-[prolipoprotein] + a 1,2-diacyl-sn-glycero-3-phospho-(1'-sn-glycerol) = an S-1,2-diacyl-sn-glyceryl-L-cysteinyl-[prolipoprotein] + sn-glycerol 1-phosphate + H(+). It functions in the pathway protein modification; lipoprotein biosynthesis (diacylglyceryl transfer). Its function is as follows. Catalyzes the transfer of the diacylglyceryl group from phosphatidylglycerol to the sulfhydryl group of the N-terminal cysteine of a prolipoprotein, the first step in the formation of mature lipoproteins. This is Phosphatidylglycerol--prolipoprotein diacylglyceryl transferase from Campylobacter curvus (strain 525.92).